The primary structure comprises 877 residues: Oligopeptide transporter 2 (877 aa).

Residues 1-167 (MSETVKDKVI…DPTIPVETFR (167 aa)) lie on the Cytoplasmic side of the membrane. A helical membrane pass occupies residues 168 to 188 (AYFLAIIWSVIGSGFNEFFSH). Residue Arg189 is a topological domain, extracellular. The chain crosses the membrane as a helical span at residues 190 to 210 (VVSISLNTPIIQMFLYICGKA). Topologically, residues 211-240 (WAKTIPCWTITIRGRKYGINIDKPWTQKEQ) are cytoplasmic. The chain crosses the membrane as a helical span at residues 241 to 261 (MFSTLLYAICQGAFYTHYNIL). At 262–272 (TQKLFYHSAFS) the chain is on the extracellular side. The chain crosses the membrane as a helical span at residues 273–293 (FGYQFLLSLSVQFIGFGFAGI). Topologically, residues 294 to 334 (LRKFVVYPARALWPTVMPTIAINKALLGKEKHESGMSRYKF) are cytoplasmic. A helical transmembrane segment spans residues 335–355 (FFLTFFIMFIYNWFPTYIINI). The Extracellular segment spans residues 356-374 (LNTFNWMTWIKPSNINLAN). Asn374 carries an N-linked (GlcNAc...) asparagine glycan. The chain crosses the membrane as a helical span at residues 375–395 (ITGGVTGLGINPISSFDWNVI). The Cytoplasmic segment spans residues 396-404 (SFNSPLVYP). The helical transmembrane segment at 405–425 (FWSYLTQYLGCILAALIVIAV) threads the bilayer. Residues 426–480 (YYSNYMSCQYLPIFTNSLYTNTGHSFKVTEVLDSDNKLDVKKYQSYSPPYYSAGN) are Extracellular-facing. A helical membrane pass occupies residues 481–501 (LVSYGAFICAYPLMITWSFIV). Topologically, residues 502–553 (HSKLLFNAFKDWALNLWAMRKLKSWVTMFKSDYRALDDYDDPHSNAMKNYKE) are cytoplasmic. A helical transmembrane segment spans residues 554–574 (VPDWWYFAILIGSLVVGIAVV). Topologically, residues 575–582 (EHYPTNTP) are extracellular. A helical membrane pass occupies residues 583 to 603 (VWGLFVCLGFNFVFLIPTTIL). The Cytoplasmic portion of the chain corresponds to 604-614 (QATTGYSFGLN). The chain crosses the membrane as a helical span at residues 615-635 (LLIEMVMGYALPGNPIAIMIL). The Extracellular segment spans residues 636 to 671 (KAFGYNIDGQADNYVSNLKIAHYCKIPPMALFRGQC). Residues 672–692 (VIVFIQIFVNLGVLNWQISNI) traverse the membrane as a helical segment. Topologically, residues 693 to 730 (KDFCTPHQNAKFTCPDAVTYYNASVVWGAIGPKRIFNY) are cytoplasmic. The chain crosses the membrane as a helical span at residues 731–751 (IYPIFKWCWLIGACIGIFFGV). Topologically, residues 752–766 (WKRWGKFYPRYFDPM) are extracellular. Residues 767-789 (LFVGGMLNMSPPYNLMYYTSGMI) traverse the membrane as a helical segment. Topologically, residues 790–811 (VSYISQYYMKRHHLNLWEKYNY) are cytoplasmic. A helical transmembrane segment spans residues 812 to 832 (VLSAGFSTGLVLSAIIIFFAV). The Extracellular portion of the chain corresponds to 833–877 (QYKDTAFNWWGNTVPYAGADGVGYPLKNITDTANGYFGYAPGHYP). The N-linked (GlcNAc...) asparagine glycan is linked to Asn860.

It belongs to the oligopeptide OPT transporter family.

The protein localises to the membrane. Its function is as follows. Transports tetra- and pentapeptides. Does not transport glutathione. The protein is Oligopeptide transporter 2 (OPT2) of Saccharomyces cerevisiae (strain ATCC 204508 / S288c) (Baker's yeast).